The sequence spans 70 residues: Gas vesicle protein A (70 aa).

The protein belongs to the gas vesicle GvpA family. The gas vesicle shell is 2 nm thick and consists of a single layer of this protein. It forms helical ribs nearly perpendicular to the long axis of the vesicle.

The protein resides in the gas vesicle shell. In terms of biological role, gas vesicles are hollow, gas filled proteinaceous nanostructures found in some microorganisms. During planktonic growth they allow positioning of the organism at a favorable depth for light or nutrient acquisition. GvpA forms the protein shell. The sequence is that of Gas vesicle protein A from Cereibacter sphaeroides (strain ATCC 17023 / DSM 158 / JCM 6121 / CCUG 31486 / LMG 2827 / NBRC 12203 / NCIMB 8253 / ATH 2.4.1.) (Rhodobacter sphaeroides).